The chain runs to 84 residues: Small ribosomal subunit protein uS17c (84 aa).

Belongs to the universal ribosomal protein uS17 family. In terms of assembly, part of the 30S ribosomal subunit.

It is found in the plastid. Its subcellular location is the chloroplast. Functionally, one of the primary rRNA binding proteins, it binds specifically to the 5'-end of 16S ribosomal RNA. This Thalassiosira pseudonana (Marine diatom) protein is Small ribosomal subunit protein uS17c (rps17).